A 155-amino-acid polypeptide reads, in one-letter code: Small ribosomal subunit protein uS7cz/uS7cy (155 aa).

This sequence belongs to the universal ribosomal protein uS7 family. In terms of assembly, part of the 30S ribosomal subunit.

Its subcellular location is the plastid. It localises to the chloroplast. Functionally, one of the primary rRNA binding proteins, it binds directly to 16S rRNA where it nucleates assembly of the head domain of the 30S subunit. The polypeptide is Small ribosomal subunit protein uS7cz/uS7cy (rps7-A) (Lotus japonicus (Lotus corniculatus var. japonicus)).